A 982-amino-acid chain; its full sequence is Serine/threonine-protein kinase ATG1 (982 aa).

Residues 19 to 324 form the Protein kinase domain; that stretch reads FVIGAEIGKG…FENFFAHPVI (306 aa). Residues 25-33 and K48 each bind ATP; that span reads IGKGSFAQV. The active-site Proton acceptor is D162. 4 disordered regions span residues 334-506, 813-834, 898-918, and 947-982; these read DDIP…REKA, RLPD…SVNG, PKRR…DGHA, and RMIS…SYSS. Basic and acidic residues-rich tracts occupy residues 335–359 and 372–387; these read DIPK…KSDD and HPTD…RRVE. A compositionally biased stretch (low complexity) spans 388-398; the sequence is PPSSAAESAPS. Positions 463-481 are enriched in polar residues; the sequence is SNASLNRSNRESSSPTSAA.

It belongs to the protein kinase superfamily. Ser/Thr protein kinase family. APG1/unc-51/ULK1 subfamily. As to quaternary structure, homodimer. Forms a ternary complex with ATG13 and ATG17. As to expression, uniformly detected in conidia, mycelia and appressoria (at protein level).

It is found in the cytoplasm. Its subcellular location is the preautophagosomal structure membrane. It catalyses the reaction L-seryl-[protein] + ATP = O-phospho-L-seryl-[protein] + ADP + H(+). The catalysed reaction is L-threonyl-[protein] + ATP = O-phospho-L-threonyl-[protein] + ADP + H(+). In terms of biological role, serine/threonine protein kinase involved in the cytoplasm to vacuole transport (Cvt) and found to be essential in autophagy, where it is required for the formation of autophagosomes. Involved in the clearance of protein aggregates which cannot be efficiently cleared by the proteasome. Required for selective autophagic degradation of the nucleus (nucleophagy) as well as for mitophagy which contributes to regulate mitochondrial quantity and quality by eliminating the mitochondria to a basal level to fulfill cellular energy requirements and preventing excess ROS production. Also involved in endoplasmic reticulum-specific autophagic process, in selective removal of ER-associated degradation (ERAD) substrates. Plays a key role in ATG9 and ATG23 cycling through the pre-autophagosomal structure and is necessary to promote ATG18 binding to ATG9 through phosphorylation of ATG9. Catalyzes phosphorylation of ATG4, decreasing the interaction between ATG4 and ATG8 and impairing deconjugation of PE-conjugated forms of ATG8. Autophagy is essential to fungal development, production of appressorium turgor, and pathogenicity in rice blast disease. The protein is Serine/threonine-protein kinase ATG1 of Pyricularia oryzae (strain 70-15 / ATCC MYA-4617 / FGSC 8958) (Rice blast fungus).